The chain runs to 230 residues: DNA mismatch repair protein MutH (230 aa).

It belongs to the MutH family.

The protein localises to the cytoplasm. Functionally, sequence-specific endonuclease that cleaves unmethylated GATC sequences. It is involved in DNA mismatch repair. This is DNA mismatch repair protein MutH from Enterobacter sp. (strain 638).